The chain runs to 188 residues: Protein GrpE (188 aa).

Residues 1–16 (MEERNEQVVEEVKEAQ) are compositionally biased toward basic and acidic residues. Positions 1-31 (MEERNEQVVEEVKEAQVEEAVTPENSEETVE) are disordered.

It belongs to the GrpE family. As to quaternary structure, homodimer.

It localises to the cytoplasm. Its function is as follows. Participates actively in the response to hyperosmotic and heat shock by preventing the aggregation of stress-denatured proteins, in association with DnaK and GrpE. It is the nucleotide exchange factor for DnaK and may function as a thermosensor. Unfolded proteins bind initially to DnaJ; upon interaction with the DnaJ-bound protein, DnaK hydrolyzes its bound ATP, resulting in the formation of a stable complex. GrpE releases ADP from DnaK; ATP binding to DnaK triggers the release of the substrate protein, thus completing the reaction cycle. Several rounds of ATP-dependent interactions between DnaJ, DnaK and GrpE are required for fully efficient folding. This chain is Protein GrpE, found in Bacillus cereus (strain G9842).